The chain runs to 238 residues: ATP-dependent dethiobiotin synthetase BioD (238 aa).

An ATP-binding site is contributed by 12–17; that stretch reads EVGKTV. T16 contributes to the Mg(2+) binding site. K37 is a catalytic residue. Residue T41 coordinates substrate. ATP is bound by residues D50, 109–112, 170–171, and 200–202; these read EGAG, GS, and PAG. D50 and E109 together coordinate Mg(2+).

This sequence belongs to the dethiobiotin synthetase family. As to quaternary structure, homodimer. It depends on Mg(2+) as a cofactor.

Its subcellular location is the cytoplasm. The catalysed reaction is (7R,8S)-7,8-diammoniononanoate + CO2 + ATP = (4R,5S)-dethiobiotin + ADP + phosphate + 3 H(+). The protein operates within cofactor biosynthesis; biotin biosynthesis; biotin from 7,8-diaminononanoate: step 1/2. Its function is as follows. Catalyzes a mechanistically unusual reaction, the ATP-dependent insertion of CO2 between the N7 and N8 nitrogen atoms of 7,8-diaminopelargonic acid (DAPA, also called 7,8-diammoniononanoate) to form a ureido ring. This is ATP-dependent dethiobiotin synthetase BioD from Streptomyces coelicolor (strain ATCC BAA-471 / A3(2) / M145).